Consider the following 84-residue polypeptide: Sec-independent protein translocase protein TatA (84 aa).

A helical transmembrane segment spans residues 1–21 (MGGISIWQLLIVAVIVVLLFG). 2 stretches are compositionally biased toward basic and acidic residues: residues 42–55 (AMSD…KTSQ) and 64–84 (IADK…KEQV). Residues 42–84 (AMSDDDAKQDKTSQDADFTAKSIADKQGEAKKEDAKSQDKEQV) are disordered.

It belongs to the TatA/E family. As to quaternary structure, the Tat system comprises two distinct complexes: a TatABC complex, containing multiple copies of TatA, TatB and TatC subunits, and a separate TatA complex, containing only TatA subunits. Substrates initially bind to the TatABC complex, which probably triggers association of the separate TatA complex to form the active translocon.

Its subcellular location is the cell inner membrane. Part of the twin-arginine translocation (Tat) system that transports large folded proteins containing a characteristic twin-arginine motif in their signal peptide across membranes. TatA could form the protein-conducting channel of the Tat system. The sequence is that of Sec-independent protein translocase protein TatA from Salmonella typhi.